A 453-amino-acid chain; its full sequence is UDP-N-acetylmuramoylalanine--D-glutamate ligase (453 aa).

Gly-119–Thr-125 provides a ligand contact to ATP.

This sequence belongs to the MurCDEF family.

It localises to the cytoplasm. It carries out the reaction UDP-N-acetyl-alpha-D-muramoyl-L-alanine + D-glutamate + ATP = UDP-N-acetyl-alpha-D-muramoyl-L-alanyl-D-glutamate + ADP + phosphate + H(+). It participates in cell wall biogenesis; peptidoglycan biosynthesis. Cell wall formation. Catalyzes the addition of glutamate to the nucleotide precursor UDP-N-acetylmuramoyl-L-alanine (UMA). In Streptococcus uberis (strain ATCC BAA-854 / 0140J), this protein is UDP-N-acetylmuramoylalanine--D-glutamate ligase.